We begin with the raw amino-acid sequence, 347 residues long: Protein POOR HOMOLOGOUS SYNAPSIS 1 (347 aa).

The protein resides in the cytoplasm. Required for accurate chromosome segregation in meiosis. Required for pairing to occur between homologous chromosomes. Acts in early recombination steps and ensures pairing fidelity and proper repair of meiotic DNA double-strand-breaks. Regulates recombination and pairing of homologous chromosomes during meiotic prophase by controlling transport of RAD50 from cytoplasm to the nucleus. May affect pairing of the gene-rich fraction of the genome rather than preventing pairing between repetitive DNA elements. The polypeptide is Protein POOR HOMOLOGOUS SYNAPSIS 1 (Zea mays (Maize)).